The chain runs to 541 residues: Glucose-6-phosphate isomerase (541 aa).

Glutamate 346 (proton donor) is an active-site residue. Residues histidine 377 and lysine 506 contribute to the active site.

Belongs to the GPI family.

The protein localises to the cytoplasm. It catalyses the reaction alpha-D-glucose 6-phosphate = beta-D-fructose 6-phosphate. Its pathway is carbohydrate biosynthesis; gluconeogenesis. The protein operates within carbohydrate degradation; glycolysis; D-glyceraldehyde 3-phosphate and glycerone phosphate from D-glucose: step 2/4. In terms of biological role, catalyzes the reversible isomerization of glucose-6-phosphate to fructose-6-phosphate. This chain is Glucose-6-phosphate isomerase, found in Agrobacterium fabrum (strain C58 / ATCC 33970) (Agrobacterium tumefaciens (strain C58)).